Reading from the N-terminus, the 206-residue chain is Small ribosomal subunit protein uS4 (206 aa).

The tract at residues 15–46 is disordered; that stretch reads MGENIWGRPKSPVNKREYGPGQHGQRRKNKLS. An S4 RNA-binding domain is found at 94 to 157; that stretch reads RRLDAIVYRA…RQLAIVLEAT (64 aa).

It belongs to the universal ribosomal protein uS4 family. As to quaternary structure, part of the 30S ribosomal subunit. Contacts protein S5. The interaction surface between S4 and S5 is involved in control of translational fidelity.

In terms of biological role, one of the primary rRNA binding proteins, it binds directly to 16S rRNA where it nucleates assembly of the body of the 30S subunit. Functionally, with S5 and S12 plays an important role in translational accuracy. This is Small ribosomal subunit protein uS4 from Cereibacter sphaeroides (strain ATCC 17025 / ATH 2.4.3) (Rhodobacter sphaeroides).